The primary structure comprises 33 residues: Potassium channel toxin alpha-KTx 24.1 (33 aa).

Intrachain disulfides connect cysteine 4/cysteine 23, cysteine 9/cysteine 28, cysteine 13/cysteine 30, and cysteine 18/cysteine 33.

The protein belongs to the short scorpion toxin superfamily. Potassium channel inhibitor family. Alpha-KTx 24 subfamily. Contains 4 disulfide bonds. As to expression, expressed by the venom gland.

The protein resides in the secreted. In terms of biological role, reversibly blocks voltage-gated potassium channels Kv1.2/KCNA2, Kv1.3/KCNA3 and, weakly, Shaker B. This Pandinus imperator (Emperor scorpion) protein is Potassium channel toxin alpha-KTx 24.1.